Reading from the N-terminus, the 203-residue chain is Glycerol-3-phosphate acyltransferase (203 aa).

5 helical membrane passes run 5-25 (IYIA…GLIL), 55-75 (LAAA…IVAA), 84-104 (IAAN…LFPV), 118-138 (IGVL…MWLA), and 159-179 (IFLW…LTLL).

This sequence belongs to the PlsY family. As to quaternary structure, probably interacts with PlsX.

It localises to the cell inner membrane. It carries out the reaction an acyl phosphate + sn-glycerol 3-phosphate = a 1-acyl-sn-glycero-3-phosphate + phosphate. It participates in lipid metabolism; phospholipid metabolism. In terms of biological role, catalyzes the transfer of an acyl group from acyl-phosphate (acyl-PO(4)) to glycerol-3-phosphate (G3P) to form lysophosphatidic acid (LPA). This enzyme utilizes acyl-phosphate as fatty acyl donor, but not acyl-CoA or acyl-ACP. In Rhodopseudomonas palustris (strain ATCC BAA-98 / CGA009), this protein is Glycerol-3-phosphate acyltransferase.